We begin with the raw amino-acid sequence, 127 residues long: Large ribosomal subunit protein bL20 (127 aa).

Belongs to the bacterial ribosomal protein bL20 family.

In terms of biological role, binds directly to 23S ribosomal RNA and is necessary for the in vitro assembly process of the 50S ribosomal subunit. It is not involved in the protein synthesizing functions of that subunit. In Corynebacterium aurimucosum (strain ATCC 700975 / DSM 44827 / CIP 107346 / CN-1) (Corynebacterium nigricans), this protein is Large ribosomal subunit protein bL20.